Consider the following 449-residue polypeptide: Packaging protein 1 (449 aa).

A compositionally biased stretch (basic residues) spans 1-10; the sequence is MESRGKHRLK. The segment at 1–64 is disordered; it reads MESRGKHRLK…SSNSILHCPP (64 aa). Positions 11 to 25 are enriched in basic and acidic residues; sequence KNGESKENLGEHEQA. A compositionally biased stretch (polar residues) spans 35-59; it reads SADSLSSPVAEPNFSSPGGRSSNSI. Position 168-175 (168-175) interacts with ATP; sequence GPTGSGKS. Positions 437 to 449 are DNA-binding; sequence TAYSKKCDKLANK.

The protein belongs to the adenoviridae packaging protein 1 family. As to quaternary structure, homodimer. Part of a genome packaging complex composed of packaging proteins 1, 2 and 3; this complex specifically binds to the packaging sequence on the left end of viral genomic DNA and performs packaging of the viral genome. Interacts with protein 33K.

It localises to the virion. It is found in the host nucleus. The protein resides in the host nucleoplasm. Its subcellular location is the host nucleolus. Its function is as follows. Component of the packaging machinery which encapsidates the viral DNA into preformed capsids and transcriptional activator of the viral major late promoter (MLP). Binds, along with packaging proteins 2 and 3, to the specific packaging sequence on the left end of viral genomic DNA and displays ATPase activity thereby providing the power stroke of the packaging machinery. The activity of packaging protein IVa2 is stimulated by protein 33K which acts as a terminase. May be the protein that pumps DNA into the capsid powered by ATP hydrolysis. Specifically binds to the 5'-CG-3' nucleotides of the repeats making up the packaging sequence. Component of the DEF-A and DEF-B transcription factors that bind downstream elements of the major late promoter (MLP), and stimulate transcription from the MLP after initiation of viral DNA replication. DEF-A is a heterodimer packaging proteins 1 and 2 and DEF-B is a homodimer of packaging protein 1. In Mus musculus (Mouse), this protein is Packaging protein 1.